The primary structure comprises 233 residues: Biosynthetic peptidoglycan transglycosylase (233 aa).

Residues 8-28 (LIALPVGIFIFFNAYVYGNII) traverse the membrane as a helical segment.

This sequence belongs to the glycosyltransferase 51 family.

The protein localises to the cell inner membrane. The enzyme catalyses [GlcNAc-(1-&gt;4)-Mur2Ac(oyl-L-Ala-gamma-D-Glu-L-Lys-D-Ala-D-Ala)](n)-di-trans,octa-cis-undecaprenyl diphosphate + beta-D-GlcNAc-(1-&gt;4)-Mur2Ac(oyl-L-Ala-gamma-D-Glu-L-Lys-D-Ala-D-Ala)-di-trans,octa-cis-undecaprenyl diphosphate = [GlcNAc-(1-&gt;4)-Mur2Ac(oyl-L-Ala-gamma-D-Glu-L-Lys-D-Ala-D-Ala)](n+1)-di-trans,octa-cis-undecaprenyl diphosphate + di-trans,octa-cis-undecaprenyl diphosphate + H(+). It functions in the pathway cell wall biogenesis; peptidoglycan biosynthesis. Functionally, peptidoglycan polymerase that catalyzes glycan chain elongation from lipid-linked precursors. The protein is Biosynthetic peptidoglycan transglycosylase of Neisseria gonorrhoeae (strain NCCP11945).